The primary structure comprises 318 residues: Ribokinase (318 aa).

Substrate contacts are provided by residues 11 to 13, 41 to 45, and glutamate 146; these read NTD and GKGAN. ATP-binding positions include asparagine 190 and 229–234; that span reads TLGSQG. K(+) contacts are provided by aspartate 256 and threonine 258. 261–262 is an ATP binding site; the sequence is GD. Aspartate 262 contacts substrate. The active-site Proton acceptor is the aspartate 262. Residues threonine 292, arginine 295, glycine 297, and serine 301 each coordinate K(+).

Belongs to the carbohydrate kinase PfkB family. Ribokinase subfamily. In terms of assembly, homodimer. It depends on Mg(2+) as a cofactor.

The protein resides in the cytoplasm. The protein localises to the nucleus. The enzyme catalyses D-ribose + ATP = D-ribose 5-phosphate + ADP + H(+). It functions in the pathway carbohydrate metabolism; D-ribose degradation; D-ribose 5-phosphate from beta-D-ribopyranose: step 2/2. Its activity is regulated as follows. Activated by a monovalent cation that binds near, but not in, the active site. The most likely occupant of the site in vivo is potassium. Ion binding induces a conformational change that may alter substrate affinity. Its function is as follows. Catalyzes the phosphorylation of ribose at O-5 in a reaction requiring ATP and magnesium. The resulting D-ribose-5-phosphate can then be used either for sythesis of nucleotides, histidine, and tryptophan, or as a component of the pentose phosphate pathway. The protein is Ribokinase of Schizosaccharomyces pombe (strain 972 / ATCC 24843) (Fission yeast).